The primary structure comprises 249 residues: Elongation factor Ts (249 aa).

The segment at 82 to 85 (TDFV) is involved in Mg(2+) ion dislocation from EF-Tu. The disordered stretch occupies residues 215-249 (QAGQLAPEAESTTETADATSETTTEKSSAKKKKKK). A compositionally biased stretch (low complexity) spans 222–236 (EAESTTETADATSET).

Belongs to the EF-Ts family.

It localises to the cytoplasm. In terms of biological role, associates with the EF-Tu.GDP complex and induces the exchange of GDP to GTP. It remains bound to the aminoacyl-tRNA.EF-Tu.GTP complex up to the GTP hydrolysis stage on the ribosome. The sequence is that of Elongation factor Ts from Rippkaea orientalis (strain PCC 8801 / RF-1) (Cyanothece sp. (strain PCC 8801)).